The following is a 174-amino-acid chain: Nucleoside-triphosphatase THEP1 (174 aa).

Residues glycine 7 to threonine 14 and leucine 94 to glycine 101 each bind ATP.

It belongs to the THEP1 NTPase family.

It catalyses the reaction a ribonucleoside 5'-triphosphate + H2O = a ribonucleoside 5'-diphosphate + phosphate + H(+). In terms of biological role, has nucleotide phosphatase activity towards ATP, GTP, CTP, TTP and UTP. May hydrolyze nucleoside diphosphates with lower efficiency. In Thermotoga sp. (strain RQ2), this protein is Nucleoside-triphosphatase THEP1.